A 643-amino-acid polypeptide reads, in one-letter code: Uromodulin (643 aa).

The first 26 residues, 1 to 26, serve as a signal peptide directing secretion; it reads MKCLFSPNFMWMAAVVTSWVIIPAAT. Residues 32–66 form the EGF-like 1 domain; the sequence is KSCSECHSNATCTVDGAATTCACQEGFTGDGLECV. 21 cysteine pairs are disulfide-bonded: Cys-34/Cys-43, Cys-37/Cys-52, Cys-54/Cys-65, Cys-71/Cys-85, Cys-79/Cys-94, Cys-96/Cys-108, Cys-114/Cys-128, Cys-122/Cys-137, Cys-139/Cys-150, Cys-152/Cys-163, Cys-157/Cys-172, Cys-176/Cys-269, Cys-197/Cys-284, Cys-219/Cys-257, Cys-225/Cys-289, Cys-250/Cys-258, Cys-299/Cys-308, Cys-302/Cys-317, Cys-319/Cys-349, Cys-337/Cys-427, and Cys-368/Cys-391. Residue Asn-40 is glycosylated (N-linked (GlcNAc...) asparagine). The region spanning 67-109 is the EGF-like 2; calcium-binding domain; that stretch reads DLDECAVLGAHNCSATKSCVNTLGSYTCVCPEGFLLSSELGCE. Asn-78 carries an N-linked (GlcNAc...) asparagine glycan. Residues 110-151 enclose the EGF-like 3; calcium-binding domain; that stretch reads DVDECAEPGLSRCHALATCINGEGNYSCVCPAGYLGDGRHCE. A glycan (N-linked (GlcNAc...) asparagine) is linked at Asn-134. A beta hairpin region spans residues 152–173; it reads CSPGSCGPGLDCVREGDALVCV. The tract at residues 174-293 is D10C; that stretch reads DPCQVHRILD…CHLAYCTDPS (120 aa). Asn-234 carries N-linked (GlcNAc...) asparagine glycosylation. N-linked (GlcNAc...) asparagine glycosylation is present at Asn-277. The EGF-like 4 domain maps to 294 to 325; that stretch reads SVEGTCEECRVDEDCKSDNGEWHCQCKQDFNV. An N-linked (GlcNAc...) asparagine glycan is attached at Asn-324. Residues 336–431 are ZP-N; that stretch reads ECGVDDIKLS…RINFACSYPL (96 aa). The ZP domain occupies 336–587; the sequence is ECGVDDIKLS…EKCRPTCPET (252 aa). 2 N-linked (GlcNAc...) asparagine glycosylation sites follow: Asn-398 and Asn-449. Residues 432–455 form a flexible ZP-N/ZP-C linker; important for secretion and polymerization into filaments region; the sequence is DMKVSLKTSLQPMVSALNISMGGT. The tract at residues 456-466 is internal hydrophobic patch (IHP); it reads GTFTVRMALFQ. Residues 456–587 are ZP-C; that stretch reads GTFTVRMALF…EKCRPTCPET (132 aa). 3 cysteine pairs are disulfide-bonded: Cys-508-Cys-568, Cys-529-Cys-584, and Cys-573-Cys-580. N-linked (GlcNAc...) asparagine glycosylation is present at Asn-515. Residues 588–591 form an essential for cleavage by HPN region; that stretch reads RFRS. Residues 600–608 form an external hydrophobic patch (EHP); regulates polymerization into filaments region; sequence VLNLGPITR. A lipid anchor (GPI-anchor amidated serine) is attached at Ser-621. Positions 622–643 are cleaved as a propeptide — removed in mature form; the sequence is SLGLLQVWLPLLLSATLTLMSP.

In terms of assembly, homodimer that then polymerizes into long filaments. The filaments can additionally assemble laterally to form a sheet. The filaments consist of a zigzag-shaped backbone with laterally protruding arms which interact with bacterial adhesin fimH. Two fimH molecules can bind to a single UMOD monomer. Post-translationally, N-glycosylated. In terms of processing, proteolytically cleaved at a conserved C-terminal proteolytic cleavage site to generate the secreted form found in urine. This cleavage is catalyzed by HPN.

Its subcellular location is the apical cell membrane. It is found in the basolateral cell membrane. The protein localises to the cell projection. It localises to the cilium membrane. The protein resides in the secreted. Functionally, functions in biogenesis and organization of the apical membrane of epithelial cells of the thick ascending limb of Henle's loop (TALH), where it promotes formation of complex filamentous gel-like structure that may play a role in the water barrier permeability. May serve as a receptor for binding and endocytosis of cytokines (IL-1, IL-2) and TNF. Facilitates neutrophil migration across renal epithelia. Its function is as follows. In the urine, may contribute to colloid osmotic pressure, retards passage of positively charged electrolytes, and inhibits formation of liquid containing supersaturated salts and subsequent formation of salt crystals. Protects against urinary tract infections by binding to type 1 fimbriated E.coli. Binds to bacterial adhesin fimH which mediates the stable formation of bacterial aggregates, prevents the binding of E.coli to uroplakins UPK1A and UPK1B which act as urothelial receptors for type I fimbriae, and allows for pathogen clearance through micturation. Also promotes aggregation of other bacteria including K.pneumoniae, P.aeruginosa and S.mitis and so may also protect against other uropathogens. In Bos taurus (Bovine), this protein is Uromodulin (UMOD).